Here is a 116-residue protein sequence, read N- to C-terminus: Iron-sulfur cluster insertion protein ErpA (116 aa).

C44, C108, and C110 together coordinate iron-sulfur cluster.

The protein belongs to the HesB/IscA family. In terms of assembly, homodimer. Iron-sulfur cluster serves as cofactor.

Its function is as follows. Required for insertion of 4Fe-4S clusters for at least IspG. In Pseudomonas entomophila (strain L48), this protein is Iron-sulfur cluster insertion protein ErpA.